We begin with the raw amino-acid sequence, 282 residues long: Digeranylgeranylglyceryl phosphate synthase (282 aa).

The next 9 membrane-spanning stretches (helical) occupy residues 15-35 (VIGA…WYLE), 36-56 (LKGI…GYVI), 81-100 (VNKA…ALSI), 104-121 (IYAL…IYYA), 131-151 (GNLL…LAFF), 159-179 (IIIP…VKGI), 201-221 (KSWR…PLPF), 222-242 (FIGF…PFTI), and 260-280 (YLKI…LPFF).

The protein belongs to the UbiA prenyltransferase family. DGGGP synthase subfamily. Mg(2+) serves as cofactor. Requires Ca(2+) as cofactor.

It is found in the cell membrane. The enzyme catalyses sn-3-O-(geranylgeranyl)glycerol 1-phosphate + (2E,6E,10E)-geranylgeranyl diphosphate = 2,3-bis-O-(geranylgeranyl)-sn-glycerol 1-phosphate + diphosphate. It participates in membrane lipid metabolism; glycerophospholipid metabolism. Inhibited by EDTA in vitro. Functionally, prenyltransferase that catalyzes the transfer of the geranylgeranyl moiety of geranylgeranyl diphosphate (GGPP) to the C2 hydroxyl of (S)-3-O-geranylgeranylglyceryl phosphate (GGGP). This reaction is the second ether-bond-formation step in the biosynthesis of archaeal membrane lipids. Cannot use other prenyl donors, i.e. farnesyl diphosphate (FPP) and phytyl diphosphate. Moreover, 4-hydroxybenzoate, 1,4-dihydroxy 2-naphthoate, homogentisate, and alpha-glycerophosphate do not function as prenyl acceptor substrates. The sequence is that of Digeranylgeranylglyceryl phosphate synthase (ubiA-2) from Saccharolobus solfataricus (strain ATCC 35092 / DSM 1617 / JCM 11322 / P2) (Sulfolobus solfataricus).